The sequence spans 501 residues: Beta-secretase 1 (501 aa).

An N-terminal signal peptide occupies residues 1 to 21 (MAPALHWLLLWVGSGMLPAQG). A propeptide spanning residues 22-45 (THLGIRLPLRSGLAGPPLGLRLPR) is cleaved from the precursor. The Extracellular segment spans residues 22–457 (THLGIRLPLR…PQTDESTLMT (436 aa)). The disordered stretch occupies residues 39-58 (LGLRLPRETDEESEEPGRRG). Residues 75-416 (YYVEMTVGSP…DRARKRIGFA (342 aa)) form the Peptidase A1 domain. D93 is a catalytic residue. K126 is modified (N6-acetyllysine). Residues N153, N172, and N223 are each glycosylated (N-linked (GlcNAc...) asparagine). Intrachain disulfides connect C216-C420, C278-C443, and C330-C380. N6-acetyllysine occurs at positions 275, 279, and 285. Residue D289 is part of the active site. Residues K299, K300, and K307 each carry the N6-acetyllysine modification. A glycan (N-linked (GlcNAc...) asparagine) is linked at N354. Residues 458–478 (IAYVMAAICALFMLPLCLMVC) traverse the membrane as a helical segment. 4 S-palmitoyl cysteine lipidation sites follow: C474, C478, C482, and C485. Over 479–501 (QWRCLRCLRHQHDDFADDISLLK) the chain is Cytoplasmic. Residues 479–501 (QWRCLRCLRHQHDDFADDISLLK) are interaction with RTN3. The DXXLL signature appears at 496-500 (DISLL). S498 is modified (phosphoserine). K501 participates in a covalent cross-link: Glycyl lysine isopeptide (Lys-Gly) (interchain with G-Cter in ubiquitin).

The protein belongs to the peptidase A1 family. As to quaternary structure, monomer. Interacts (via DXXLL motif) with GGA1, GGA2 and GGA3 (via their VHS domain); the interaction highly increases when BACE1 is phosphorylated at Ser-498. Interacts with RTN1; RTN2; RTN3 and RTN4; the interaction leads to inhibition of amyloid precursor protein processing. Interacts with SNX6. Interacts with PCSK9. Interacts with NAT8 and NAT8B. Interacts with BIN1. Interacts (via extracellular domain) with ADAM10 (via extracellular domain). Interacts with SORL1; this interaction may affect binding with APP and hence reduce APP cleavage. Interacts with NRDC AND NRG1. In terms of processing, N-Glycosylated. Addition of a bisecting N-acetylglucosamine by MGAT3 blocks lysosomal targeting, further degradation and is required for maintaining stability under stress conditions. Post-translationally, palmitoylation mediates lipid raft localization. Acetylated in the endoplasmic reticulum at Lys-126, Lys-275, Lys-279, Lys-285, Lys-299, Lys-300 and Lys-307. Acetylation by NAT8 and NAT8B is transient and deacetylation probably occurs in the Golgi. Acetylation regulates the maturation, the transport to the plasma membrane, the stability and the expression of the protein. In terms of processing, ubiquitinated at Lys-501, ubiquitination leads to lysosomal degradation. Monoubiquitinated and 'Lys-63'-linked polyubitinated. Deubiquitnated by USP8; inhibits lysosomal degradation. Post-translationally, phosphorylation at Ser-498 is required for interaction with GGA1 and retrograded transport from endosomal compartments to the trans-Golgi network. Non-phosphorylated BACE1 enters a direct recycling route to the cell surface. In terms of tissue distribution, expressed in the brain, specifically in neurons and astrocytes (at protein level).

It is found in the cell membrane. The protein localises to the golgi apparatus. Its subcellular location is the trans-Golgi network. The protein resides in the endoplasmic reticulum. It localises to the endosome. It is found in the late endosome. The protein localises to the early endosome. Its subcellular location is the cell surface. The protein resides in the cytoplasmic vesicle membrane. It localises to the membrane raft. It is found in the lysosome. The protein localises to the recycling endosome. Its subcellular location is the cell projection. The protein resides in the axon. It localises to the dendrite. It carries out the reaction Broad endopeptidase specificity. Cleaves Glu-Val-Asn-Leu-|-Asp-Ala-Glu-Phe in the Swedish variant of Alzheimer's amyloid precursor protein.. With respect to regulation, inhibited by RTN3 and RTN4. In terms of biological role, responsible for the proteolytic processing of the amyloid precursor protein (APP). Cleaves at the N-terminus of the A-beta peptide sequence, between residues 671 and 672 of APP, leads to the generation and extracellular release of beta-cleaved soluble APP, and a corresponding cell-associated C-terminal fragment which is later released by gamma-secretase. Cleaves CHL1. This is Beta-secretase 1 from Mus musculus (Mouse).